A 504-amino-acid polypeptide reads, in one-letter code: CaM kinase-like vesicle-associated protein (504 aa).

One can recognise a Protein kinase domain in the interval 24–286 (YDLGQVVKTE…AEEAISHEWI (263 aa)). Residues 378 to 504 (KSDDMASADR…AQESQRVETS (127 aa)) form a disordered region. Serine 384 is subject to Phosphoserine. Positions 390–431 (TPATDGSATPATDGSVTPATDGSITPATDGSVTPATDRSATP) are enriched in polar residues. Phosphothreonine occurs at positions 438 and 462. Over residues 445-470 (TVPAAQSSAAPAAKAAATPEPAVAQP) the composition is skewed to low complexity.

Belongs to the protein kinase superfamily. CAMK Ser/Thr protein kinase family. In terms of assembly, interacts with calmodulin, in the presence of calcium. The cofactor is Ca(2+). As to expression, expressed in brain and weakly in eye. Not detected in liver, kidney, spleen, thymus, bladder, aorta, lung, intestine, esophagus, stomach, skeletal muscle, heart, diaphragm, uterus, tail skin, submaxillary gland, prostate, ear, epididymis, placenta, pancreas, ovary, testis, adrenal gland, parathyroid gland, thyroid gland, pineal gland, pituitary and sciatic nerve. In adult hippocampus, predominantly expressed in caudate nucleus, cortex, hypothalamus, olfactory bulb, and midbrain and faintly in pons, brainstem and spinal cord.

It localises to the cell membrane. Its subcellular location is the cytoplasmic vesicle membrane. Functionally, has no detectable kinase activity in vitro. The chain is CaM kinase-like vesicle-associated protein (Camkv) from Rattus norvegicus (Rat).